The sequence spans 208 residues: Putative 3-methyladenine DNA glycosylase (208 aa).

The tract at residues 1-20 (MGRAHTVSRGEDHPPIARSE) is disordered.

It belongs to the DNA glycosylase MPG family.

In Mesorhizobium japonicum (strain LMG 29417 / CECT 9101 / MAFF 303099) (Mesorhizobium loti (strain MAFF 303099)), this protein is Putative 3-methyladenine DNA glycosylase.